Consider the following 459-residue polypeptide: GTPase Der (459 aa).

2 EngA-type G domains span residues 3–167 (FTLA…PEPV) and 188–363 (IRVA…AVWN). GTP is bound by residues 9-16 (GRPNVGKS), 56-60 (DTAGL), 119-122 (NKSE), 194-201 (GRPNAGKS), 241-245 (DTAGL), and 306-309 (NKWD). In terms of domain architecture, KH-like spans 364–448 (RRVPTAALNR…PVRITLREKA (85 aa)).

The protein belongs to the TRAFAC class TrmE-Era-EngA-EngB-Septin-like GTPase superfamily. EngA (Der) GTPase family. Associates with the 50S ribosomal subunit.

GTPase that plays an essential role in the late steps of ribosome biogenesis. This Rhodopseudomonas palustris (strain TIE-1) protein is GTPase Der.